The following is a 2540-amino-acid chain: Probable JmjC domain-containing histone demethylation protein 2C (2540 aa).

A compositionally biased stretch (polar residues) spans 278–309; sequence TRAQANSPRPAMNSQAAVPKQNTHQQQQQRSI. The interval 278–478 is disordered; sequence TRAQANSPRP…TVSDHNSNDL (201 aa). 2 positions are modified to phosphoserine: Ser-317 and Ser-320. Residues 323–342 are compositionally biased toward basic and acidic residues; it reads DEEKMKEEKYDYISRGENPK. The segment covering 343–353 has biased composition (basic residues); that stretch reads GKNKHLMNKRR. The segment covering 354 to 371 has biased composition (basic and acidic residues); it reads KPEEDEKKLNMKRLRTDN. Residues Ser-373 and Ser-376 each carry the phosphoserine modification. Over residues 373 to 382 the composition is skewed to low complexity; the sequence is SDFSESSDSE. Composition is skewed to basic and acidic residues over residues 383-403, 410-427, and 438-452; these read NSNK…ELKN, NGEE…EETL, and QEDK…RKSV. Residues 464–478 are compositionally biased toward polar residues; that stretch reads SSEQSTVSDHNSNDL. A phosphoserine mark is found at Ser-475 and Ser-501. At Thr-505 the chain carries Phosphothreonine. Residues Ser-601, Ser-617, Ser-638, Ser-639, Ser-641, Ser-652, and Ser-943 each carry the phosphoserine modification. The interval 631-656 is disordered; sequence VDTHKIKSSPSPEVVKPKITHSPDSV. Disordered regions lie at residues 1242 to 1263 and 1614 to 1692; these read GKVQ…SQAN and NRRK…NSNT. The segment covering 1643–1652 has biased composition (basic residues); it reads KRQPKPTYKK. The segment covering 1653 to 1669 has biased composition (basic and acidic residues); the sequence is KQNDLQKRKGEIEEDLK. The C6-type zinc finger occupies 1846–1871; sequence CDACEATLFNIHWVCQKCGFVVCLDC. The span at 1971 to 1991 shows a compositional bias: polar residues; the sequence is PESQQQNTPPKSEKNGGSSPE. Residues 1971–2064 form a disordered region; that stretch reads PESQQQNTPP…LVSQNNEQGS (94 aa). Ser-1989 bears the Phosphoserine mark. The segment covering 2016-2043 has biased composition (basic and acidic residues); sequence AEQKAREEKKENKELTLENQIKEEREQD. The segment covering 2045–2064 has biased composition (polar residues); it reads SESPNGRTSPLVSQNNEQGS. The LXXLL motif signature appears at 2066–2070; sequence LRDLL. Residues Lys-2132 and Lys-2136 each participate in a glycyl lysine isopeptide (Lys-Gly) (interchain with G-Cter in SUMO2) cross-link. The JmjC domain maps to 2274-2498; that stretch reads MPARYEDLLK…ESFHLTQELR (225 aa). Residues His-2336, Glu-2338, and His-2466 each contribute to the Fe cation site.

Belongs to the JHDM2 histone demethylase family. Interacts specifically with the ligand-binding domain of the thyroid receptor (TR). Requires the presence of thyroid hormone for its interaction. Requires Fe(2+) as cofactor.

It is found in the nucleus. In terms of biological role, probable histone demethylase that specifically demethylates 'Lys-9' of histone H3, thereby playing a central role in histone code. Demethylation of Lys residue generates formaldehyde and succinate. May be involved in hormone-dependent transcriptional activation, by participating in recruitment to androgen-receptor target genes. In Homo sapiens (Human), this protein is Probable JmjC domain-containing histone demethylation protein 2C (JMJD1C).